Here is a 203-residue protein sequence, read N- to C-terminus: Dephospho-CoA kinase (203 aa).

The DPCK domain maps to 3-201; it reads SVGLTGGIGS…QRYLECAAAA (199 aa). 11–16 provides a ligand contact to ATP; the sequence is GSGKTT.

It belongs to the CoaE family.

It is found in the cytoplasm. The enzyme catalyses 3'-dephospho-CoA + ATP = ADP + CoA + H(+). The protein operates within cofactor biosynthesis; coenzyme A biosynthesis; CoA from (R)-pantothenate: step 5/5. In terms of biological role, catalyzes the phosphorylation of the 3'-hydroxyl group of dephosphocoenzyme A to form coenzyme A. This is Dephospho-CoA kinase from Burkholderia pseudomallei (strain 1710b).